Consider the following 297-residue polypeptide: tRNA dimethylallyltransferase (297 aa).

An ATP-binding site is contributed by 10-17 (APTGAGKT). 12–17 (TGAGKT) is a binding site for substrate. The interaction with substrate tRNA stretch occupies residues 34–37 (DSRQ).

It belongs to the IPP transferase family. In terms of assembly, monomer. Mg(2+) is required as a cofactor.

The enzyme catalyses adenosine(37) in tRNA + dimethylallyl diphosphate = N(6)-dimethylallyladenosine(37) in tRNA + diphosphate. Its function is as follows. Catalyzes the transfer of a dimethylallyl group onto the adenine at position 37 in tRNAs that read codons beginning with uridine, leading to the formation of N6-(dimethylallyl)adenosine (i(6)A). The protein is tRNA dimethylallyltransferase of Leptospira interrogans serogroup Icterohaemorrhagiae serovar Lai (strain 56601).